Consider the following 295-residue polypeptide: Ribosomal RNA small subunit methyltransferase A (295 aa).

S-adenosyl-L-methionine contacts are provided by N29, L31, G56, E77, D102, and N128.

This sequence belongs to the class I-like SAM-binding methyltransferase superfamily. rRNA adenine N(6)-methyltransferase family. RsmA subfamily.

Its subcellular location is the cytoplasm. It carries out the reaction adenosine(1518)/adenosine(1519) in 16S rRNA + 4 S-adenosyl-L-methionine = N(6)-dimethyladenosine(1518)/N(6)-dimethyladenosine(1519) in 16S rRNA + 4 S-adenosyl-L-homocysteine + 4 H(+). Specifically dimethylates two adjacent adenosines (A1518 and A1519) in the loop of a conserved hairpin near the 3'-end of 16S rRNA in the 30S particle. May play a critical role in biogenesis of 30S subunits. The protein is Ribosomal RNA small subunit methyltransferase A of Listeria innocua serovar 6a (strain ATCC BAA-680 / CLIP 11262).